Here is a 659-residue protein sequence, read N- to C-terminus: MEYYTSKEVAEWLKSIGLEKYIEQFSQNNIEGRHLNHLTLPLLKDLGIENTAKGKQFLKQRDYLREFPRPCILRFIACNGQTRAVQSRGDYQKTLAIALKKFSLEDASKFIVCVSQSSRIKLITEEEFKQICFNSSSPERDRLIIVPKEKPCPSFEDLRRSWEIELAQPAALSSQSSLSPKLSSVLPTSTQKRSVRSNNAKPFESYQRPPSELINSRISDFFPDHQPKLLEKTISNSLRRNLSIRTSQGHNLGNFGQEILPRSSRRARPSELVCPLSSLRISVAEDVNRLPRIDRGFDPPLTVSSTQRISRPPSLQKSITMVGVEPLYQSNGNEKSSKYNVFSESAHGNHQVLSFSPGSSPSFIEQPSPISPTSTTSEDTNTLEEDTDDQSIKWIRGALIGSGSFGQVYLGMNASSGELMAVKQVILDSVSESKDRHAKLLDALAGEIALLQELSHEHIVQYLGSNLNSDHLNIFLEYVPGGSVAGLLTMYGSFEETLVKNFIKQTLKGLEYLHSRGIVHRDIKGANILVDNKGKIKISDFGISKKLELNSTSTKTGGARPSFQGSSFWMAPEVVKQTMHTEKTDIWSLGCLVIEMLTSKHPYPNCDQMQAIFRIGENILPEFPSNISSSAIDFLEKTFAIDCNLRPTASELLSHPFVS.

An SAM domain is found at 4–67 (YTSKEVAEWL…LKQRDYLREF (64 aa)). A compositionally biased stretch (low complexity) spans 180-190 (PKLSSVLPTST). Disordered regions lie at residues 180–209 (PKLS…YQRP) and 354–387 (SFSP…EEDT). A compositionally biased stretch (polar residues) spans 354 to 365 (SFSPGSSPSFIE). Positions 367–380 (PSPISPTSTTSEDT) are enriched in low complexity. Positions 394–658 (WIRGALIGSG…ASELLSHPFV (265 aa)) constitute a Protein kinase domain. ATP is bound by residues 400–408 (IGSGSFGQV) and lysine 423. The active-site Proton acceptor is aspartate 522.

This sequence belongs to the protein kinase superfamily. STE Ser/Thr protein kinase family. MAP kinase kinase kinase subfamily. As to quaternary structure, interacts with rad24 and rad25; these prevent its translocation to the cell membrane during nitrogen starvation.

The protein resides in the cytoplasm. It is found in the cell membrane. The enzyme catalyses L-seryl-[protein] + ATP = O-phospho-L-seryl-[protein] + ADP + H(+). It catalyses the reaction L-threonyl-[protein] + ATP = O-phospho-L-threonyl-[protein] + ADP + H(+). Serine/threonine protein kinase involved in conjugation and sporulation. It is thought that it phosphorylates the byr1 protein kinase which itself phosphorylate the spk1 kinase. The sequence is that of Protein kinase byr2 from Schizosaccharomyces pombe (strain 972 / ATCC 24843) (Fission yeast).